The primary structure comprises 394 residues: DNA replication and repair protein RecF (394 aa).

Residue 30-37 (GSNGQGKT) participates in ATP binding.

Belongs to the RecF family.

The protein localises to the cytoplasm. In terms of biological role, the RecF protein is involved in DNA metabolism; it is required for DNA replication and normal SOS inducibility. RecF binds preferentially to single-stranded, linear DNA. It also seems to bind ATP. The sequence is that of DNA replication and repair protein RecF from Cutibacterium acnes (strain DSM 16379 / KPA171202) (Propionibacterium acnes).